A 228-amino-acid polypeptide reads, in one-letter code: Lipoprotein-releasing system ATP-binding protein LolD (228 aa).

The ABC transporter domain occupies 7–227 (LQLSGIERHY…TIEDGKVVEL (221 aa)). 43 to 50 (APSGTGKS) contributes to the ATP binding site.

This sequence belongs to the ABC transporter superfamily. Lipoprotein translocase (TC 3.A.1.125) family. The complex is composed of two ATP-binding proteins (LolD) and two transmembrane proteins (LolC and LolE).

Its subcellular location is the cell inner membrane. In terms of biological role, part of the ABC transporter complex LolCDE involved in the translocation of mature outer membrane-directed lipoproteins, from the inner membrane to the periplasmic chaperone, LolA. Responsible for the formation of the LolA-lipoprotein complex in an ATP-dependent manner. This Rhizobium meliloti (strain 1021) (Ensifer meliloti) protein is Lipoprotein-releasing system ATP-binding protein LolD.